Reading from the N-terminus, the 457-residue chain is Protein PIN-LIKES 2 (457 aa).

The Lumenal portion of the chain corresponds to Met-1–Asp-15. Residues Ile-16–Leu-36 form a helical membrane-spanning segment. At Ala-37–Lys-54 the chain is on the cytoplasmic side. Residues Leu-55 to Leu-75 form a helical membrane-spanning segment. Topologically, residues Asp-76–Pro-85 are lumenal. The helical transmembrane segment at Val-86 to Cys-106 threads the bilayer. The Cytoplasmic segment spans residues Arg-107 to Thr-116. A helical transmembrane segment spans residues Ile-117 to Cys-137. Over His-138 to Arg-151 the chain is Lumenal. The helical transmembrane segment at Gly-152 to Tyr-172 threads the bilayer. Residues His-173 to Thr-291 are Cytoplasmic-facing. The helical transmembrane segment at Ile-292–Gly-312 threads the bilayer. The Lumenal portion of the chain corresponds to Tyr-313–Asp-322. Residues Ser-323 to Leu-343 traverse the membrane as a helical segment. Residues Ser-344–Thr-356 are Cytoplasmic-facing. Residues Thr-357 to Met-377 traverse the membrane as a helical segment. Residues Ser-378 to Lys-393 lie on the Lumenal side of the membrane. Residues Phe-394–Leu-414 traverse the membrane as a helical segment. Residues Arg-415–Ala-424 are Cytoplasmic-facing. A helical membrane pass occupies residues Leu-425–Phe-445. Residues Lys-446–Gln-457 are Lumenal-facing.

Belongs to the auxin efflux carrier (TC 2.A.69.2) family. Expressed in seedlings, rosette and cauline leaves, flowers and siliques.

It is found in the endoplasmic reticulum membrane. Functionally, involved in cellular auxin homeostasis by regulating auxin metabolism. Regulates intracellular auxin accumulation at the endoplasmic reticulum and thus auxin availability for nuclear auxin signaling. This chain is Protein PIN-LIKES 2, found in Arabidopsis thaliana (Mouse-ear cress).